The primary structure comprises 378 residues: Queuine tRNA-ribosyltransferase (378 aa).

The Proton acceptor role is filled by Asp91. Substrate is bound by residues 91-95 (DSGGF), Asp145, Gln197, and Gly224. Residue Asp274 is the Nucleophile of the active site. Residues 279–283 (TRLAR) are RNA binding; important for wobble base 34 recognition. Zn(2+)-binding residues include Cys312, Cys314, Cys317, and His343.

This sequence belongs to the queuine tRNA-ribosyltransferase family. In terms of assembly, homodimer. Within each dimer, one monomer is responsible for RNA recognition and catalysis, while the other monomer binds to the replacement base PreQ1. The cofactor is Zn(2+).

The enzyme catalyses 7-aminomethyl-7-carbaguanine + guanosine(34) in tRNA = 7-aminomethyl-7-carbaguanosine(34) in tRNA + guanine. Its pathway is tRNA modification; tRNA-queuosine biosynthesis. Functionally, catalyzes the base-exchange of a guanine (G) residue with the queuine precursor 7-aminomethyl-7-deazaguanine (PreQ1) at position 34 (anticodon wobble position) in tRNAs with GU(N) anticodons (tRNA-Asp, -Asn, -His and -Tyr). Catalysis occurs through a double-displacement mechanism. The nucleophile active site attacks the C1' of nucleotide 34 to detach the guanine base from the RNA, forming a covalent enzyme-RNA intermediate. The proton acceptor active site deprotonates the incoming PreQ1, allowing a nucleophilic attack on the C1' of the ribose to form the product. After dissociation, two additional enzymatic reactions on the tRNA convert PreQ1 to queuine (Q), resulting in the hypermodified nucleoside queuosine (7-(((4,5-cis-dihydroxy-2-cyclopenten-1-yl)amino)methyl)-7-deazaguanosine). This is Queuine tRNA-ribosyltransferase from Methylacidiphilum infernorum (isolate V4) (Methylokorus infernorum (strain V4)).